The following is a 460-amino-acid chain: tRNA modification GTPase MnmE (460 aa).

Arginine 24, glutamate 81, and lysine 121 together coordinate (6S)-5-formyl-5,6,7,8-tetrahydrofolate. Residues 218-385 (GMVVAIAGPP…LIAAIEDFAA (168 aa)) form the TrmE-type G domain. GTP is bound by residues 228–233 (NVGKST), 247–253 (SPHAGTT), and 272–275 (DTAG). Mg(2+)-binding residues include serine 232 and threonine 253. Position 460 (lysine 460) interacts with (6S)-5-formyl-5,6,7,8-tetrahydrofolate.

It belongs to the TRAFAC class TrmE-Era-EngA-EngB-Septin-like GTPase superfamily. TrmE GTPase family. In terms of assembly, homodimer. Heterotetramer of two MnmE and two MnmG subunits. The cofactor is K(+).

Its subcellular location is the cytoplasm. Its function is as follows. Exhibits a very high intrinsic GTPase hydrolysis rate. Involved in the addition of a carboxymethylaminomethyl (cmnm) group at the wobble position (U34) of certain tRNAs, forming tRNA-cmnm(5)s(2)U34. The chain is tRNA modification GTPase MnmE from Rhodopseudomonas palustris (strain BisB5).